The sequence spans 295 residues: 4-hydroxy-tetrahydrodipicolinate synthase (295 aa).

Threonine 48 is a binding site for pyruvate. Catalysis depends on tyrosine 136, which acts as the Proton donor/acceptor. Catalysis depends on lysine 164, which acts as the Schiff-base intermediate with substrate. Residue isoleucine 206 coordinates pyruvate.

The protein belongs to the DapA family. As to quaternary structure, homotetramer; dimer of dimers.

The protein localises to the cytoplasm. The catalysed reaction is L-aspartate 4-semialdehyde + pyruvate = (2S,4S)-4-hydroxy-2,3,4,5-tetrahydrodipicolinate + H2O + H(+). Its pathway is amino-acid biosynthesis; L-lysine biosynthesis via DAP pathway; (S)-tetrahydrodipicolinate from L-aspartate: step 3/4. Its function is as follows. Catalyzes the condensation of (S)-aspartate-beta-semialdehyde [(S)-ASA] and pyruvate to 4-hydroxy-tetrahydrodipicolinate (HTPA). This is 4-hydroxy-tetrahydrodipicolinate synthase from Actinobacillus pleuropneumoniae serotype 5b (strain L20).